We begin with the raw amino-acid sequence, 181 residues long: Shikimate kinase (181 aa).

23–28 contacts ATP; sequence GTGKST. A Mg(2+)-binding site is contributed by serine 27. Substrate contacts are provided by aspartate 45, arginine 69, and glycine 91. Arginine 129 provides a ligand contact to ATP. Arginine 148 is a substrate binding site.

The protein belongs to the shikimate kinase family. In terms of assembly, monomer. Mg(2+) is required as a cofactor.

Its subcellular location is the cytoplasm. The catalysed reaction is shikimate + ATP = 3-phosphoshikimate + ADP + H(+). The protein operates within metabolic intermediate biosynthesis; chorismate biosynthesis; chorismate from D-erythrose 4-phosphate and phosphoenolpyruvate: step 5/7. In terms of biological role, catalyzes the specific phosphorylation of the 3-hydroxyl group of shikimic acid using ATP as a cosubstrate. In Geobacter sulfurreducens (strain ATCC 51573 / DSM 12127 / PCA), this protein is Shikimate kinase.